The primary structure comprises 391 residues: Homoserine O-acetyltransferase (391 aa).

The 311-residue stretch at 50-360 (NAILICHALT…DKGHDAFLLD (311 aa)) folds into the AB hydrolase-1 domain. Catalysis depends on serine 155, which acts as the Nucleophile. Residue arginine 225 coordinates substrate. Residues aspartate 321 and histidine 354 contribute to the active site. Substrate is bound at residue aspartate 355.

This sequence belongs to the AB hydrolase superfamily. MetX family. As to quaternary structure, homodimer.

It is found in the cytoplasm. It catalyses the reaction L-homoserine + acetyl-CoA = O-acetyl-L-homoserine + CoA. It participates in amino-acid biosynthesis; L-methionine biosynthesis via de novo pathway; O-acetyl-L-homoserine from L-homoserine: step 1/1. In terms of biological role, transfers an acetyl group from acetyl-CoA to L-homoserine, forming acetyl-L-homoserine. This Rhodospirillum rubrum (strain ATCC 11170 / ATH 1.1.1 / DSM 467 / LMG 4362 / NCIMB 8255 / S1) protein is Homoserine O-acetyltransferase.